Reading from the N-terminus, the 251-residue chain is Phosphate import ATP-binding protein PstB 2 (251 aa).

Residues I5–L246 enclose the ABC transporter domain. Position 37–44 (G37–S44) interacts with ATP.

The protein belongs to the ABC transporter superfamily. Phosphate importer (TC 3.A.1.7) family. As to quaternary structure, the complex is composed of two ATP-binding proteins (PstB), two transmembrane proteins (PstC and PstA) and a solute-binding protein (PstS).

It localises to the cell membrane. The catalysed reaction is phosphate(out) + ATP + H2O = ADP + 2 phosphate(in) + H(+). In terms of biological role, part of the ABC transporter complex PstSACB involved in phosphate import. Responsible for energy coupling to the transport system. This chain is Phosphate import ATP-binding protein PstB 2, found in Lactobacillus johnsonii (strain CNCM I-12250 / La1 / NCC 533).